The following is a 467-amino-acid chain: Hydroxymethylglutaryl-CoA synthase erg13A (467 aa).

Ala-35 contacts (3S)-3-hydroxy-3-methylglutaryl-CoA. Residue Glu-86 is the Proton donor/acceptor of the active site. Residues Cys-118, Thr-160, Ser-209, His-259, Lys-268, Asn-334, and Ser-368 each contribute to the (3S)-3-hydroxy-3-methylglutaryl-CoA site. The Acyl-thioester intermediate role is filled by Cys-118. Catalysis depends on His-259, which acts as the Proton donor/acceptor.

The protein belongs to the thiolase-like superfamily. HMG-CoA synthase family.

The catalysed reaction is acetoacetyl-CoA + acetyl-CoA + H2O = (3S)-3-hydroxy-3-methylglutaryl-CoA + CoA + H(+). The protein operates within metabolic intermediate biosynthesis; (R)-mevalonate biosynthesis; (R)-mevalonate from acetyl-CoA: step 2/3. Hydroxymethylglutaryl-CoA synthase; part of the first module of ergosterol biosynthesis pathway that includes the early steps of the pathway, conserved across all eukaryotes, and which results in the formation of mevalonate from acetyl-coenzyme A (acetyl-CoA). Erg13A and erg13B condense acetyl-CoA with acetoacetyl-CoA to form hydroxymethylglutaryl-CoA (HMG-CoA). The first module starts with the action of the cytosolic acetyl-CoA acetyltransferase erg10B that catalyzes the formation of acetoacetyl-CoA. The hydroxymethylglutaryl-CoA synthases erg13A and erg13B then condense acetyl-CoA with acetoacetyl-CoA to form HMG-CoA. The rate-limiting step of the early module is the reduction to mevalonate by the 3-hydroxy-3-methylglutaryl-coenzyme A (HMG-CoA) reductases hmg1 and hmg2. Mevalonate is also a precursor for the extracellular siderophore triacetylfusarinine C (TAFC). This is Hydroxymethylglutaryl-CoA synthase erg13A from Aspergillus fumigatus (strain ATCC MYA-4609 / CBS 101355 / FGSC A1100 / Af293) (Neosartorya fumigata).